The following is a 165-amino-acid chain: uncharacterized protein (165 aa).

Residues 1–165 (MDIKVVKGSI…EAWEKVLGLR (165 aa)) form the Macro domain.

This is an uncharacterized protein from Aquifex aeolicus (strain VF5).